Here is a 143-residue protein sequence, read N- to C-terminus: Flagellar assembly factor FliW (143 aa).

This sequence belongs to the FliW family. As to quaternary structure, interacts with translational regulator CsrA and flagellin(s).

Its subcellular location is the cytoplasm. Acts as an anti-CsrA protein, binds CsrA and prevents it from repressing translation of its target genes, one of which is flagellin. Binds to flagellin and participates in the assembly of the flagellum. The protein is Flagellar assembly factor FliW of Clostridium botulinum (strain ATCC 19397 / Type A).